Here is a 132-residue protein sequence, read N- to C-terminus: L-ectoine synthase (132 aa).

The protein belongs to the ectoine synthase family.

The catalysed reaction is (2S)-4-acetamido-2-aminobutanoate = L-ectoine + H2O. It functions in the pathway amine and polyamine biosynthesis; ectoine biosynthesis; L-ectoine from L-aspartate 4-semialdehyde: step 3/3. Catalyzes the circularization of gamma-N-acetyl-alpha,gamma-diaminobutyric acid (ADABA) to ectoine (1,4,5,6-tetrahydro-2-methyl-4-pyrimidine carboxylic acid), which is an excellent osmoprotectant. In Teredinibacter turnerae (strain ATCC 39867 / T7901), this protein is L-ectoine synthase.